Consider the following 494-residue polypeptide: Acetylcholine receptor subunit epsilon (494 aa).

Residues 1-20 (MTMALLGTLLLLALFGRSQG) form the signal peptide. The Extracellular segment spans residues 21-239 (KNEELSLYHH…VIYTLIIRRK (219 aa)). Residues asparagine 86 and asparagine 161 are each glycosylated (N-linked (GlcNAc...) asparagine). A disulfide bridge links cysteine 148 with cysteine 162. Residues 240–264 (PLFYVINIIVPCVLISGLVLLAYFL) form a helical membrane-spanning segment. Residues 265 to 272 (PAQAGGQK) are Cytoplasmic-facing. Residues 273–291 (CTVSINVLLAQTVFLFLIA) form a helical membrane-spanning segment. The Extracellular portion of the chain corresponds to 292 to 306 (QKIPETSLSVPLLGR). The helical transmembrane segment at 307–328 (YLIFVMVVATLIVMNCVIVLNV) threads the bilayer. The Cytoplasmic segment spans residues 329–457 (SLRTPTTHAT…WVRMGKALDN (129 aa)). Residues 458–481 (VCFWAALVLFSVGSTLIFLGGYFN) traverse the membrane as a helical segment. The Extracellular segment spans residues 482–494 (QVPDLPYPPCIQP).

The protein belongs to the ligand-gated ion channel (TC 1.A.9) family. Acetylcholine receptor (TC 1.A.9.1) subfamily. Epsilon/CHRNE sub-subfamily. In terms of assembly, pentamer of two alpha chains, and one each of the beta, delta, and gamma (in immature muscle) or epsilon (in mature muscle) chains. The muscle heteropentamer composed of alpha-1, beta-1, delta, epsilon subunits interacts with the alpha-conotoxin ImII.

It localises to the postsynaptic cell membrane. The protein resides in the cell membrane. It carries out the reaction K(+)(in) = K(+)(out). The catalysed reaction is Na(+)(in) = Na(+)(out). In terms of biological role, after binding acetylcholine, the AChR responds by an extensive change in conformation that affects all subunits and leads to opening of an ion-conducting channel across the plasma membrane. The chain is Acetylcholine receptor subunit epsilon (Chrne) from Rattus norvegicus (Rat).